Reading from the N-terminus, the 442-residue chain is Probable glycine dehydrogenase (decarboxylating) subunit 1 (442 aa).

The protein belongs to the GcvP family. N-terminal subunit subfamily. In terms of assembly, the glycine cleavage system is composed of four proteins: P, T, L and H. In this organism, the P 'protein' is a heterodimer of two subunits.

It carries out the reaction N(6)-[(R)-lipoyl]-L-lysyl-[glycine-cleavage complex H protein] + glycine + H(+) = N(6)-[(R)-S(8)-aminomethyldihydrolipoyl]-L-lysyl-[glycine-cleavage complex H protein] + CO2. Its function is as follows. The glycine cleavage system catalyzes the degradation of glycine. The P protein binds the alpha-amino group of glycine through its pyridoxal phosphate cofactor; CO(2) is released and the remaining methylamine moiety is then transferred to the lipoamide cofactor of the H protein. This is Probable glycine dehydrogenase (decarboxylating) subunit 1 from Geotalea uraniireducens (strain Rf4) (Geobacter uraniireducens).